The primary structure comprises 424 residues: Set1 complex component spp1 (424 aa).

The interval 80–108 is disordered; that stretch reads QQPTIPKKPPVSAHRRGPRKHRGNANSQL. A compositionally biased stretch (basic residues) spans 92-102; it reads AHRRGPRKHRG. Residues 118–168 form a PHD-type zinc finger; the sequence is PLYCICQKPDDGSWMLGCDGCEDWFHGTCVNIPESYNDLTVQYFCPKCTEE.

Component of the Set1 complex composed of ash2, sdc1, set1, shg1, spp1, swd1, swd2 and swd3.

Its subcellular location is the nucleus. In terms of biological role, the Set1 complex specifically methylates 'Lys-4' of histone H3. The protein is Set1 complex component spp1 (spp1) of Schizosaccharomyces pombe (strain 972 / ATCC 24843) (Fission yeast).